The following is a 346-amino-acid chain: Probable electron transfer flavoprotein subunit alpha, mitochondrial (346 aa).

285–313 (LYVAVGISGAIQHLAGMKESKMIVAINKD) is an FAD binding site.

Belongs to the ETF alpha-subunit/FixB family. Heterodimer of an alpha and a beta subunit. The cofactor is FAD.

It localises to the mitochondrion matrix. The electron transfer flavoprotein serves as a specific electron acceptor for several dehydrogenases, including five acyl-CoA dehydrogenases, glutaryl-CoA and sarcosine dehydrogenase. It transfers the electrons to the main mitochondrial respiratory chain via ETF-ubiquinone oxidoreductase (ETF dehydrogenase). The sequence is that of Probable electron transfer flavoprotein subunit alpha, mitochondrial (ETF1) from Cryptococcus neoformans var. grubii (Filobasidiella neoformans var. grubii).